The primary structure comprises 237 residues: Phosphoribosylaminoimidazole-succinocarboxamide synthase (237 aa).

Belongs to the SAICAR synthetase family.

It carries out the reaction 5-amino-1-(5-phospho-D-ribosyl)imidazole-4-carboxylate + L-aspartate + ATP = (2S)-2-[5-amino-1-(5-phospho-beta-D-ribosyl)imidazole-4-carboxamido]succinate + ADP + phosphate + 2 H(+). It functions in the pathway purine metabolism; IMP biosynthesis via de novo pathway; 5-amino-1-(5-phospho-D-ribosyl)imidazole-4-carboxamide from 5-amino-1-(5-phospho-D-ribosyl)imidazole-4-carboxylate: step 1/2. The protein is Phosphoribosylaminoimidazole-succinocarboxamide synthase of Marinobacter nauticus (strain ATCC 700491 / DSM 11845 / VT8) (Marinobacter aquaeolei).